Reading from the N-terminus, the 173-residue chain is NADH-ubiquinone oxidoreductase chain 6 (173 aa).

The next 5 membrane-spanning stretches (helical) occupy residues 1-21 (MTYF…AVAS), 27-47 (YGVV…LSLG), 48-68 (VSFV…VVFV), 87-107 (VVGY…IGGF), and 139-159 (CGVG…FVVL).

Belongs to the complex I subunit 6 family.

It localises to the mitochondrion membrane. It carries out the reaction a ubiquinone + NADH + 5 H(+)(in) = a ubiquinol + NAD(+) + 4 H(+)(out). In terms of biological role, core subunit of the mitochondrial membrane respiratory chain NADH dehydrogenase (Complex I) that is believed to belong to the minimal assembly required for catalysis. Complex I functions in the transfer of electrons from NADH to the respiratory chain. The immediate electron acceptor for the enzyme is believed to be ubiquinone. In Cepphus columba (Pigeon guillemot), this protein is NADH-ubiquinone oxidoreductase chain 6 (MT-ND6).